Here is a 442-residue protein sequence, read N- to C-terminus: tRNA modification GTPase MnmE (442 aa).

(6S)-5-formyl-5,6,7,8-tetrahydrofolate is bound by residues R24, E82, and K120. Positions 217–367 (GLHIVITGEP…LVSVIKEKVE (151 aa)) constitute a TrmE-type G domain. Residues 227–232 (NVGKST), 246–252 (SEYVGTT), and 271–274 (DTAG) contribute to the GTP site. Mg(2+)-binding residues include S231 and T252. K442 contacts (6S)-5-formyl-5,6,7,8-tetrahydrofolate.

Belongs to the TRAFAC class TrmE-Era-EngA-EngB-Septin-like GTPase superfamily. TrmE GTPase family. As to quaternary structure, homodimer. Heterotetramer of two MnmE and two MnmG subunits. The cofactor is K(+).

It is found in the cytoplasm. In terms of biological role, exhibits a very high intrinsic GTPase hydrolysis rate. Involved in the addition of a carboxymethylaminomethyl (cmnm) group at the wobble position (U34) of certain tRNAs, forming tRNA-cmnm(5)s(2)U34. This chain is tRNA modification GTPase MnmE, found in Wolbachia sp. subsp. Brugia malayi (strain TRS).